We begin with the raw amino-acid sequence, 32 residues long: TVCVYRTCDKDCKRRGYRSGKCINNACKCYPY.

Intrachain disulfides connect C3–C22, C8–C27, and C12–C29.

As to expression, expressed by the venom gland.

It localises to the secreted. Blocks human voltage-gated potassium (Kv) channels Kv1.2/KCNA2 and Kv1.3/KCNA3. Does not block human Kv1.1 at 100nM concentration. The polypeptide is Potassium channel toxin alpha-KTx 10.6 (Centruroides bonito (Scorpion)).